A 266-amino-acid chain; its full sequence is Protein crossbronx-like (266 aa).

The UBC core domain occupies 15–178 (KQGYHILAEY…VQEQAIASRN (164 aa)).

The protein belongs to the ubiquitin-conjugating enzyme family. FTS subfamily.

This is Protein crossbronx-like from Drosophila yakuba (Fruit fly).